Here is a 144-residue protein sequence, read N- to C-terminus: uncharacterized protein (144 aa).

Positions 50-140 (NQDKAIVVDT…YWKTDNLPLI (91 aa)) constitute a Rhodanese domain.

This is an uncharacterized protein from Buchnera aphidicola subsp. Acyrthosiphon pisum (strain APS) (Acyrthosiphon pisum symbiotic bacterium).